Consider the following 155-residue polypeptide: Ribonuclease H (155 aa).

The RNase H type-1 domain occupies 1–142; it reads MLKQVEIFTD…CDELARAAAM (142 aa). Residues aspartate 10, glutamate 48, aspartate 70, and aspartate 134 each contribute to the Mg(2+) site.

This sequence belongs to the RNase H family. Monomer. Mg(2+) serves as cofactor.

It is found in the cytoplasm. The enzyme catalyses Endonucleolytic cleavage to 5'-phosphomonoester.. Its function is as follows. Endonuclease that specifically degrades the RNA of RNA-DNA hybrids. This Salmonella paratyphi A (strain AKU_12601) protein is Ribonuclease H.